An 816-amino-acid polypeptide reads, in one-letter code: H(+)/Cl(-) exchange transporter 5 (816 aa).

Topologically, residues 1 to 124 (MAMWQGAMDN…WALIHSVSDA (124 aa)) are cytoplasmic. The next 2 membrane-spanning stretches (helical) occupy residues 125–162 (FSGW…ICTG) and 208–231 (VNYF…VKAF). The short motif at 237–241 (GSGIP) is the Selectivity filter part_1 element. Ser238 serves as a coordination point for chloride. The helical intramembrane region spans 240–247 (IPEIKTIL). 2 consecutive transmembrane segments (helical) span residues 256 to 275 (LGKW…VSSG) and 281 to 300 (EGPL…HCFN). The Selectivity filter part_2 motif lies at 279 to 283 (GKEGP). Intramembrane regions (helical) lie at residues 312–324 (VLSA…VSVA) and 328–336 (PIGGVLFSL). The next 5 membrane-spanning stretches (helical) occupy residues 348 to 366 (LWRS…RSIN), 389 to 414 (LVPF…IAWC), 422 to 442 (LGKY…ILAF), 498 to 518 (MWQL…TFGM), and 523 to 542 (GLFI…LGVG). The short motif at 523-527 (GLFIP) is the Selectivity filter part_3 element. Residue Phe525 coordinates chloride. Residues 570-584 (GLYAMVGAAACLGGV) constitute an intramembrane region (helical). Positions 585-587 (TRM) form an intramembrane region, note=Loop between two helices. An intramembrane region (helical) is located at residues 588–599 (TVSLVVIMFELT). An intramembrane region (note=Loop between two helices) is located at residues 600–604 (GGLEY). The chain crosses the membrane as a helical span at residues 605-622 (IVPLMAAAMTSKWVADAL). Residues 623–816 (GREGIYDAHI…NQDPESILFN (194 aa)) lie on the Cytoplasmic side of the membrane. Tyr628 serves as a coordination point for chloride. 2 consecutive CBS domains span residues 656–720 (MKPR…ARKK) and 752–811 (ILDL…QDPE). Residues Thr666, 687 to 689 (YSG), and 794 to 797 (TKKD) each bind ATP.

The protein belongs to the chloride channel (TC 2.A.49) family. ClC-5/CLCN5 subfamily. In terms of assembly, interacts with NEDD4 and NEDD4L. Post-translationally, ubiquitinated by NEDD4L in the presence of albumin; which promotes endocytosis and proteasomal degradation. In terms of tissue distribution, kidney specific.

The protein resides in the golgi apparatus membrane. It is found in the endosome membrane. The protein localises to the cell membrane. The catalysed reaction is 2 chloride(in) + H(+)(out) = 2 chloride(out) + H(+)(in). Its function is as follows. Proton-coupled chloride transporter. Functions as antiport system and exchanges chloride ions against protons. Important for normal acidification of the endosome lumen. May play an important role in renal tubular function. The CLC channel family contains both chloride channels and proton-coupled anion transporters that exchange chloride or another anion for protons. The absence of conserved gating glutamate residues is typical for family members that function as channels. The protein is H(+)/Cl(-) exchange transporter 5 (Clcn5) of Rattus norvegicus (Rat).